The sequence spans 344 residues: Nicotinate-nucleotide--dimethylbenzimidazole phosphoribosyltransferase (344 aa).

Residue Glu310 is the Proton acceptor of the active site.

This sequence belongs to the CobT family.

The enzyme catalyses 5,6-dimethylbenzimidazole + nicotinate beta-D-ribonucleotide = alpha-ribazole 5'-phosphate + nicotinate + H(+). It functions in the pathway nucleoside biosynthesis; alpha-ribazole biosynthesis; alpha-ribazole from 5,6-dimethylbenzimidazole: step 1/2. Its function is as follows. Catalyzes the synthesis of alpha-ribazole-5'-phosphate from nicotinate mononucleotide (NAMN) and 5,6-dimethylbenzimidazole (DMB). This chain is Nicotinate-nucleotide--dimethylbenzimidazole phosphoribosyltransferase, found in Shewanella amazonensis (strain ATCC BAA-1098 / SB2B).